Here is a 216-residue protein sequence, read N- to C-terminus: Holliday junction branch migration complex subunit RuvA (216 aa).

The interval 1–64 is domain I; the sequence is MISFIKGVLI…EDAQQLYGFK (64 aa). A domain II region spans residues 65 to 143; it reads SKVDKKVFQE…KMANEIYAQT (79 aa). The segment at 144–163 is flexible linker; that stretch reads SGTTTTSQDSQAQQAPTSVV. A domain III region spans residues 164 to 216; the sequence is LANSIFNESVDALLALGYKQKDAEKMARSAMGDATTAAEVIRKALQGSIKSKR.

It belongs to the RuvA family. Homotetramer. Forms an RuvA(8)-RuvB(12)-Holliday junction (HJ) complex. HJ DNA is sandwiched between 2 RuvA tetramers; dsDNA enters through RuvA and exits via RuvB. An RuvB hexamer assembles on each DNA strand where it exits the tetramer. Each RuvB hexamer is contacted by two RuvA subunits (via domain III) on 2 adjacent RuvB subunits; this complex drives branch migration. In the full resolvosome a probable DNA-RuvA(4)-RuvB(12)-RuvC(2) complex forms which resolves the HJ.

Its subcellular location is the cytoplasm. Its function is as follows. The RuvA-RuvB-RuvC complex processes Holliday junction (HJ) DNA during genetic recombination and DNA repair, while the RuvA-RuvB complex plays an important role in the rescue of blocked DNA replication forks via replication fork reversal (RFR). RuvA specifically binds to HJ cruciform DNA, conferring on it an open structure. The RuvB hexamer acts as an ATP-dependent pump, pulling dsDNA into and through the RuvAB complex. HJ branch migration allows RuvC to scan DNA until it finds its consensus sequence, where it cleaves and resolves the cruciform DNA. The protein is Holliday junction branch migration complex subunit RuvA of Francisella tularensis subsp. mediasiatica (strain FSC147).